Consider the following 161-residue polypeptide: Protein-export protein SecB (161 aa).

The protein belongs to the SecB family. As to quaternary structure, homotetramer, a dimer of dimers. One homotetramer interacts with 1 SecA dimer.

It is found in the cytoplasm. In terms of biological role, one of the proteins required for the normal export of preproteins out of the cell cytoplasm. It is a molecular chaperone that binds to a subset of precursor proteins, maintaining them in a translocation-competent state. It also specifically binds to its receptor SecA. This Bradyrhizobium diazoefficiens (strain JCM 10833 / BCRC 13528 / IAM 13628 / NBRC 14792 / USDA 110) protein is Protein-export protein SecB.